The primary structure comprises 304 residues: Putative S-adenosyl-L-methionine-dependent methyltransferase MAP_3385 (304 aa).

Residues Asp129 and 158–159 (DL) each bind S-adenosyl-L-methionine.

This sequence belongs to the UPF0677 family.

Its function is as follows. Exhibits S-adenosyl-L-methionine-dependent methyltransferase activity. In Mycolicibacterium paratuberculosis (strain ATCC BAA-968 / K-10) (Mycobacterium paratuberculosis), this protein is Putative S-adenosyl-L-methionine-dependent methyltransferase MAP_3385.